The following is a 378-amino-acid chain: Homoserine O-acetyltransferase (378 aa).

The AB hydrolase-1 domain maps to 54–355 (NAILVCHALS…NNPAGHDSFL (302 aa)). Catalysis depends on Ser159, which acts as the Nucleophile. Residue Arg228 participates in substrate binding. Active-site residues include Asp318 and His351. Asp352 serves as a coordination point for substrate.

It belongs to the AB hydrolase superfamily. MetX family. In terms of assembly, homodimer.

The protein resides in the cytoplasm. The enzyme catalyses L-homoserine + acetyl-CoA = O-acetyl-L-homoserine + CoA. Its pathway is amino-acid biosynthesis; L-methionine biosynthesis via de novo pathway; O-acetyl-L-homoserine from L-homoserine: step 1/1. Functionally, transfers an acetyl group from acetyl-CoA to L-homoserine, forming acetyl-L-homoserine. This is Homoserine O-acetyltransferase from Leptospira biflexa serovar Patoc (strain Patoc 1 / Ames).